The sequence spans 207 residues: Large ribosomal subunit protein uL4 (207 aa).

This sequence belongs to the universal ribosomal protein uL4 family. In terms of assembly, part of the 50S ribosomal subunit.

Its function is as follows. One of the primary rRNA binding proteins, this protein initially binds near the 5'-end of the 23S rRNA. It is important during the early stages of 50S assembly. It makes multiple contacts with different domains of the 23S rRNA in the assembled 50S subunit and ribosome. Functionally, forms part of the polypeptide exit tunnel. The polypeptide is Large ribosomal subunit protein uL4 (Rickettsia africae (strain ESF-5)).